The sequence spans 406 residues: Histidine--tRNA ligase (406 aa).

Belongs to the class-II aminoacyl-tRNA synthetase family. As to quaternary structure, homodimer.

It is found in the cytoplasm. The enzyme catalyses tRNA(His) + L-histidine + ATP = L-histidyl-tRNA(His) + AMP + diphosphate + H(+). The sequence is that of Histidine--tRNA ligase from Nitratiruptor sp. (strain SB155-2).